Consider the following 82-residue polypeptide: Large ribosomal subunit protein bL28 (82 aa).

Belongs to the bacterial ribosomal protein bL28 family.

The chain is Large ribosomal subunit protein bL28 from Vesicomyosocius okutanii subsp. Calyptogena okutanii (strain HA).